The sequence spans 392 residues: NAC domain-containing protein 58 (392 aa).

Residues 9 to 173 (LPPGFRFHPT…DWVLCRIYKK (165 aa)) form the NAC domain. The tract at residues 317–345 (STSAGAVVEPPAVTGKRKRSSDGGEPTIQ) is disordered.

Expressed in leaves, nodes, internodes and mature seeds. Highly expressed in roots. Expressed in leaf sheaths, flag leaves and inflorescences. Expressed in primary and lateral roots, particularly in the vascular tissues. Expressed in the primary phloem of the culm and leaf sheaths. Expressed principally in the primary phloem and in the peripheral zone of the leaf vascular bundles. Expressed in the floral tissues.

It localises to the nucleus. Its function is as follows. Transcription factor that acts as a positive regulator of the jasmonate (JA) pathway to mediate leaf senescence. May directly regulate LOX2, AOC, AOS2, AOC1 and OPR7, which are genes involved in the biosynthesis of JA. Regulates positively leaf senescence by directly targeting senescence-associated genes (SAGs) related to chlorophyll degradation, nutrient transport and other genes associated with abscisic acid-induced leaf senescence. Transcription activator that plays a role in mediating abiotic stress responses through the abscisic acid (ABA) pathway. Possesses transcriptional activator activity in yeast. This Oryza sativa subsp. japonica (Rice) protein is NAC domain-containing protein 58.